The sequence spans 452 residues: Transcription factor ETV6 (452 aa).

Residues 1–10 (MSETPAQCSI) are compositionally biased toward polar residues. The tract at residues 1 to 30 (MSETPAQCSIKQERISYTPPESPVPSYASS) is disordered. K11 is modified (N6-acetyllysine; alternate). Residue K11 forms a Glycyl lysine isopeptide (Lys-Gly) (interchain with G-Cter in SUMO2); alternate linkage. T18 bears the Phosphothreonine mark. At S22 the chain carries Phosphoserine. In terms of domain architecture, PNT spans 40–124 (ALRMEEDSIR…ELLQHILKQR (85 aa)). The interval 158–262 (VQRTPRPSVD…PKPSSPRQES (105 aa)) is disordered. 2 positions are modified to phosphoserine: S213 and S238. Residues 230–250 (QESYPLSVSPMENNHCPASSE) show a composition bias toward polar residues. At S257 the chain carries Phosphoserine; by MAPK14. Residue K288 forms a Glycyl lysine isopeptide (Lys-Gly) (interchain with G-Cter in SUMO2) linkage. At K302 the chain carries N6-acetyllysine; alternate. K302 is covalently cross-linked (Glycyl lysine isopeptide (Lys-Gly) (interchain with G-Cter in SUMO2); alternate). S323 is modified (phosphoserine). Positions 339–420 (RLLWDYVYQL…PGQRLLFRFM (82 aa)) form a DNA-binding region, ETS. Residues K403 and K421 each participate in a glycyl lysine isopeptide (Lys-Gly) (interchain with G-Cter in SUMO2) cross-link.

Belongs to the ETS family. As to quaternary structure, can form homodimers or heterodimers with TEL2 or FLI1. Interacts with L3MBTL1 and HDAC9. Phosphorylation of Ser-257 by MAPK14 (p38) inhibits ETV6 transcriptional repression. As to expression, ubiquitous.

It is found in the nucleus. In terms of biological role, transcriptional repressor; binds to the DNA sequence 5'-CCGGAAGT-3'. Plays a role in hematopoiesis and malignant transformation. The chain is Transcription factor ETV6 (ETV6) from Homo sapiens (Human).